Reading from the N-terminus, the 555-residue chain is MEPVTKWSPKQVVDWTRGLDDCLQQYVHKFEREKINGEQLLQISHQDLEELGVTRIGHQELVLEAVDLLCALNYGLETDNMKNLVLKLRASSHNLQNYISSRRKSPAYDGNTSRKAPNEFLTSVVELIGAAKALLAWLDRAPFTGITDFSVTKNKIIQLCLDLTTTVQKDCFVAEMEDKVLTVVKVLNGICDKTIRSTTDPVMSQCACLEEVHLPNIKPGEGLGMYIKSTYDGLHVITGTTENSPADRSQKIHAGDEVIQVNQQTVVGWQLKNLVKKLRENPTGVVLLLKKRPTGSFNFTPAPLKNLRWKPPLVQTSPPPATTQSPESTMDTSLKKEKSAILDLYIPPPPAVPYSPRDENGSFVYGGSSKCKQPLPGPKGSESPNSFLDQESRRRRFTIADSDQLPGYSVETNILPTKMREKTPSYGKPRPLSMPADGNWMGIVDPFARPRGHGRKGEDALCRYFSNERIPPIIEESSSPPYRFSRPTTERHLVRGADYIRGSRCYINSDLHSSATIPFQEEGTKKKSGSSATKSSSTEPSLLVSWFTRLKLLTH.

An SAM domain is found at 7–72; the sequence is WSPKQVVDWT…LEAVDLLCAL (66 aa). Residues 80–174 enclose the CRIC domain; sequence NMKNLVLKLR…TTVQKDCFVA (95 aa). Residues 211 to 293 enclose the PDZ domain; it reads EVHLPNIKPG…GVVLLLKKRP (83 aa). Disordered regions lie at residues 309–334, 347–390, and 517–537; these read WKPP…DTSL, PPPP…FLDQ, and IPFQ…KSSS. The DUF1170 domain maps to 325-546; the sequence is SPESTMDTSL…STEPSLLVSW (222 aa). 2 positions are modified to phosphoserine: S381 and S383.

It belongs to the CNKSR family. As to quaternary structure, interacts with epithelial sodium channel ENaC. Interacts directly with SCNN1A (ENaC subunit alpha) and SCNN1B (ENaC subunit beta) C-terminal tails. Interacts with ENaC regulatory proteins NEDD4L, RAF1 and SGK1.

It localises to the cytoplasm. It is found in the apical cell membrane. Involved in transepithelial sodium transport. Regulates aldosterone-induced and epithelial sodium channel (ENaC)-mediated sodium transport through regulation of ENaC cell surface expression. Acts as a scaffold protein coordinating the assembly of an ENaC-regulatory complex (ERC). The protein is Connector enhancer of kinase suppressor of ras 3 (CNKSR3) of Homo sapiens (Human).